We begin with the raw amino-acid sequence, 800 residues long: Protocadherin beta-10 (800 aa).

Positions 1-26 are cleaved as a signal peptide; that stretch reads MAVRELCFPRQRQVLFLFLFWGVSLA. The Extracellular portion of the chain corresponds to 27–692; that stretch reads GSGFGRYSVT…AEADLLTVYL (666 aa). 5 consecutive Cadherin domains span residues 35–133, 138–242, 247–347, 352–451, and 456–561; these read VTEE…APVF, TVLK…APQF, YETQ…PPEL, FSNS…APAF, and YTLF…SPFV. Residues Asn169 and Asn181 are each glycosylated (N-linked (GlcNAc...) asparagine). Asn418 and Asn436 each carry an N-linked (GlcNAc...) asparagine glycan. A glycan (N-linked (GlcNAc...) asparagine) is linked at Asn567. In terms of domain architecture, Cadherin 6 spans 568–671; that stretch reads GSAPCTELVP…LVDGFSQPYL (104 aa). Residues 693 to 713 traverse the membrane as a helical segment; it reads VVALASVSSLFLLSVLLFVAV. Topologically, residues 714–800 are cytoplasmic; the sequence is RLCRRSRAAS…FRNSFGFNIQ (87 aa).

The protein resides in the cell membrane. Functionally, potential calcium-dependent cell-adhesion protein. May be involved in the establishment and maintenance of specific neuronal connections in the brain. This is Protocadherin beta-10 (PCDHB10) from Homo sapiens (Human).